The following is a 317-amino-acid chain: Adenine deaminase (317 aa).

Zn(2+)-binding residues include His-14, His-16, and His-194. Catalysis depends on Glu-197, which acts as the Proton donor. Residue Asp-275 coordinates Zn(2+). Position 276 (Asp-276) interacts with substrate.

It belongs to the metallo-dependent hydrolases superfamily. Adenosine and AMP deaminases family. Adenine deaminase type 2 subfamily. Requires Zn(2+) as cofactor.

The catalysed reaction is adenine + H2O + H(+) = hypoxanthine + NH4(+). Its function is as follows. Catalyzes the hydrolytic deamination of adenine to hypoxanthine. Plays an important role in the purine salvage pathway and in nitrogen catabolism. The sequence is that of Adenine deaminase from Pseudomonas fluorescens (strain Pf0-1).